A 403-amino-acid chain; its full sequence is MLRWTTAGESHGQALVALIEHMPAGVPISQDDIALQLSRRRLGYGRGARMKFEADDLTLLSGIRHGLTLGSPIAIMIGNTEWPKWTTIMSPEALDLEDPEVAKAMASGRGAPLTRPRPGHADFAGMVKFDHSEARPILERSSARETAARVAAATVARNFLRETLGVEVLSHVISIGASAPYKGPHPSFADIEAIDASPVRACDKTAEESMISEIETAKKQGDTLGGIVEVIVEGLPIGLGSHTSGEDRLDAQLAAALMGIQAIKGVEVGDGFAEARRRGSEAHDEMVRTDEGVDRETNRAGGLEGGMTNGQTLRLRAAMKPISTVPRALKTVDMSTGGSATAIHQRSDVCAVPAAGVVAEAMVALVLARAVLEKFGGDSLAETKRNIAAYQEYVAGRLEWGEA.

Residues arginine 40 and arginine 46 each contribute to the NADP(+) site. Residues 140 to 142 (RSS) and 261 to 262 (QA) contribute to the FMN site. Residues 277-298 (RRGSEAHDEMVRTDEGVDRETN) show a composition bias toward basic and acidic residues. The disordered stretch occupies residues 277 to 307 (RRGSEAHDEMVRTDEGVDRETNRAGGLEGGM). FMN-binding positions include glycine 305, 320-324 (KPIST), and arginine 346.

The protein belongs to the chorismate synthase family. Homotetramer. Requires FMNH2 as cofactor.

The catalysed reaction is 5-O-(1-carboxyvinyl)-3-phosphoshikimate = chorismate + phosphate. It participates in metabolic intermediate biosynthesis; chorismate biosynthesis; chorismate from D-erythrose 4-phosphate and phosphoenolpyruvate: step 7/7. In terms of biological role, catalyzes the anti-1,4-elimination of the C-3 phosphate and the C-6 proR hydrogen from 5-enolpyruvylshikimate-3-phosphate (EPSP) to yield chorismate, which is the branch point compound that serves as the starting substrate for the three terminal pathways of aromatic amino acid biosynthesis. This reaction introduces a second double bond into the aromatic ring system. This is Chorismate synthase from Corynebacterium aurimucosum (strain ATCC 700975 / DSM 44827 / CIP 107346 / CN-1) (Corynebacterium nigricans).